The chain runs to 397 residues: Phosphoribulokinase, chloroplastic (397 aa).

The transit peptide at 1 to 44 (MAVSAYTVPTTSHLGFNQKKQLFFCNKSAYKRVSFSSRPCVITC) directs the protein to the chloroplast. The cysteines at positions 62 and 101 are disulfide-linked.

This sequence belongs to the phosphoribulokinase family.

The protein localises to the plastid. The protein resides in the chloroplast. It catalyses the reaction D-ribulose 5-phosphate + ATP = D-ribulose 1,5-bisphosphate + ADP + H(+). The protein operates within carbohydrate biosynthesis; Calvin cycle. Its activity is regulated as follows. Light regulated via thioredoxin by reversible oxidation/reduction of sulfhydryl/disulfide groups. The protein is Phosphoribulokinase, chloroplastic of Mesembryanthemum crystallinum (Common ice plant).